The following is an 898-amino-acid chain: Phosphoenolpyruvate carboxylase (898 aa).

Active-site residues include His-138 and Lys-561.

This sequence belongs to the PEPCase type 1 family. Mg(2+) serves as cofactor.

The catalysed reaction is oxaloacetate + phosphate = phosphoenolpyruvate + hydrogencarbonate. Its function is as follows. Forms oxaloacetate, a four-carbon dicarboxylic acid source for the tricarboxylic acid cycle. The chain is Phosphoenolpyruvate carboxylase from Streptococcus pneumoniae serotype 2 (strain D39 / NCTC 7466).